A 293-amino-acid polypeptide reads, in one-letter code: Extracellular metalloprotease PODANS_2_14170 (293 aa).

The signal sequence occupies residues 1–18; the sequence is MRFSLALAAAGLAQTAFA. N60 is a glycosylation site (N-linked (GlcNAc...) asparagine). H206 contacts Zn(2+). Residue E207 is part of the active site. H210 is a binding site for Zn(2+). A disulfide bridge connects residues C242 and C269.

Belongs to the peptidase M43B family.

It localises to the secreted. Its function is as follows. Secreted metalloproteinase that allows assimilation of proteinaceous substrates. This chain is Extracellular metalloprotease PODANS_2_14170, found in Podospora anserina (strain S / ATCC MYA-4624 / DSM 980 / FGSC 10383) (Pleurage anserina).